A 217-amino-acid polypeptide reads, in one-letter code: Flagellin B1 (217 aa).

A propeptide spanning residues 1–12 is cleaved from the precursor; it reads MKVFEFLKGKRG.

Belongs to the archaeal flagellin family.

The protein resides in the archaeal flagellum. Functionally, flagellin is the subunit protein which polymerizes to form the filaments of archaeal flagella. This chain is Flagellin B1 (flaB1), found in Methanocaldococcus jannaschii (strain ATCC 43067 / DSM 2661 / JAL-1 / JCM 10045 / NBRC 100440) (Methanococcus jannaschii).